Here is a 301-residue protein sequence, read N- to C-terminus: GTP cyclohydrolase FolE2 (301 aa).

Belongs to the GTP cyclohydrolase IV family.

It carries out the reaction GTP + H2O = 7,8-dihydroneopterin 3'-triphosphate + formate + H(+). Its pathway is cofactor biosynthesis; 7,8-dihydroneopterin triphosphate biosynthesis; 7,8-dihydroneopterin triphosphate from GTP: step 1/1. Converts GTP to 7,8-dihydroneopterin triphosphate. The sequence is that of GTP cyclohydrolase FolE2 from Pseudomonas savastanoi pv. phaseolicola (strain 1448A / Race 6) (Pseudomonas syringae pv. phaseolicola (strain 1448A / Race 6)).